A 69-amino-acid chain; its full sequence is Consomatin Be1 (69 aa).

The N-terminal stretch at 1–22 is a signal peptide; it reads MEMAYWVMVMMMVWITAPLSEG. Positions 23–57 are excised as a propeptide; that stretch reads GKLNDVIRALAPDDVTPQFILRSLISRRRSDSDVR. 4-carboxyglutamate is present on Glu-58. Residues Cys-62 and Cys-67 are joined by a disulfide bond. Trp-64 carries the D-tryptophan modification. 4-hydroxyproline occurs at positions 68 and 69.

It belongs to the conotoxin C superfamily. Consomatin family. In terms of tissue distribution, expressed by the venom duct.

Its subcellular location is the secreted. Moderately activates human somatostatin receptors (SSTR) with a preferential activation of SSTR1 and SSTR4. In vivo, does not cause behavioral changes in mice within a few minutes of intracranial injection, but causes a progressive loss of movement thereafter. Four to five hours after injection, mice recover, even with the highest dose tested. Shows antinociception and antihyperalgesia activities in two mouse models of acute pain, most probably by acting outside the central nervous system. This is Consomatin Be1 from Conus betulinus (Beech cone).